Consider the following 263-residue polypeptide: Hydroxyethylthiazole kinase (263 aa).

Met-41 contributes to the substrate binding site. Arg-117 and Thr-163 together coordinate ATP. Residue Gly-190 participates in substrate binding.

This sequence belongs to the Thz kinase family. Requires Mg(2+) as cofactor.

The catalysed reaction is 5-(2-hydroxyethyl)-4-methylthiazole + ATP = 4-methyl-5-(2-phosphooxyethyl)-thiazole + ADP + H(+). It functions in the pathway cofactor biosynthesis; thiamine diphosphate biosynthesis; 4-methyl-5-(2-phosphoethyl)-thiazole from 5-(2-hydroxyethyl)-4-methylthiazole: step 1/1. Catalyzes the phosphorylation of the hydroxyl group of 4-methyl-5-beta-hydroxyethylthiazole (THZ). This Exiguobacterium sp. (strain ATCC BAA-1283 / AT1b) protein is Hydroxyethylthiazole kinase.